The primary structure comprises 365 residues: Cytoplasmic tRNA 2-thiolation protein 1 (365 aa).

Belongs to the TtcA family. CTU1/NCS6/ATPBD3 subfamily.

The protein resides in the cytoplasm. The protein operates within tRNA modification; 5-methoxycarbonylmethyl-2-thiouridine-tRNA biosynthesis. Functionally, plays a central role in 2-thiolation of mcm(5)S(2)U at tRNA wobble positions of tRNA(Lys), tRNA(Glu) and tRNA(Gln). Directly binds tRNAs and probably acts by catalyzing adenylation of tRNAs, an intermediate required for 2-thiolation. It is unclear whether it acts as a sulfurtransferase that transfers sulfur from thiocarboxylated URM1 onto the uridine of tRNAs at wobble position. Prior mcm(5) tRNA modification by the elongator complex is required for 2-thiolation. May also be involved in protein urmylation. The polypeptide is Cytoplasmic tRNA 2-thiolation protein 1 (Yarrowia lipolytica (strain CLIB 122 / E 150) (Yeast)).